We begin with the raw amino-acid sequence, 428 residues long: MAKIVDIKGREVLDSRGNPTVEADVLLDNGIIGSACAPSGASTGSREALELRDGDKSRYMGKGVLKAVANINGPIRDLLLGKDPVDQKALDHAMIALDATENKASLGANAILAVSLAAAKAAAQDQDLPLYAHIANLNGTPGVYSMPVPMMNIINGGEHADNNIDIQEFMIQPVGAKSFAEALRWGTEIFHHLKAVLKARGLNTAVGDEGGFAPNLASNKEALEAIAEAVANAGYTLGTDVTLALDCAASEFYKNGKYTLSEEGEYSSAEFAEYLAELTRKHPIISIEDGLDESDWDGWKVLTEKIGEKVQLVGDDLFVTNTKILKEGIDKNIANSILIKFNQIGTLTETLEAIQMAKAAGYTAIISHRSGETEDSTIADLAVGTSAGQIKTGSLCRSDRVSKYNQLLRIEEQLGSKAVYRGRAEFRG.

(2R)-2-phosphoglycerate is bound at residue glutamine 167. The active-site Proton donor is the glutamate 209. Mg(2+) is bound by residues aspartate 246, glutamate 288, and aspartate 315. (2R)-2-phosphoglycerate is bound by residues lysine 340, arginine 369, serine 370, and lysine 391. Lysine 340 serves as the catalytic Proton acceptor.

Belongs to the enolase family. Component of the RNA degradosome, a multiprotein complex involved in RNA processing and mRNA degradation. Requires Mg(2+) as cofactor.

The protein localises to the cytoplasm. It is found in the secreted. It localises to the cell surface. It carries out the reaction (2R)-2-phosphoglycerate = phosphoenolpyruvate + H2O. It functions in the pathway carbohydrate degradation; glycolysis; pyruvate from D-glyceraldehyde 3-phosphate: step 4/5. Its function is as follows. Catalyzes the reversible conversion of 2-phosphoglycerate (2-PG) into phosphoenolpyruvate (PEP). It is essential for the degradation of carbohydrates via glycolysis. This is Enolase 1 from Pseudomonas syringae pv. tomato (strain ATCC BAA-871 / DC3000).